The sequence spans 581 residues: Sabinene synthase 1, chloroplastic (581 aa).

The transit peptide at 1 to 28 (MPLNSLHNLERKPSKAWSTSCTAPAARL) directs the protein to the chloroplast. (2E)-geranyl diphosphate contacts are provided by arginine 297, aspartate 334, aspartate 338, arginine 475, and aspartate 478. Mg(2+) is bound by residues aspartate 334 and aspartate 338. Residues 334 to 338 (DDVYD) carry the DDXXD motif motif. Mg(2+)-binding residues include aspartate 478, threonine 482, and glutamate 486.

The protein belongs to the terpene synthase family. Tpsb subfamily. Mg(2+) is required as a cofactor. Mn(2+) serves as cofactor.

The protein resides in the plastid. It is found in the chloroplast. It catalyses the reaction (2E)-geranyl diphosphate = sabinene + diphosphate. It carries out the reaction (2E)-geranyl diphosphate = beta-myrcene + diphosphate. It functions in the pathway secondary metabolite biosynthesis; terpenoid biosynthesis. Functionally, monoterpene synthase (TPS) involved in the biosynthesis of monoterpene natural products, components of the chemical defense arsenal. Catalyzes the conversion of (2E)-geranyl diphosphate (GPP) into sabinene, and, as minor products, myrcene. The sequence is that of Sabinene synthase 1, chloroplastic from Salvia pomifera (Apple sage).